A 211-amino-acid chain; its full sequence is MIGIIDYGRGNLRSVEKALWKLGYPAKVLESPAELMAVKGIILPGVGAFADAMAALEEKGWIQPLIHYAHSGKPFLGICLGMQVLFEVGEEHGEHKGLGLLPGRVVRFPAGRKIPHMGWNTLHQEKPCRLLEGIPDEAYFYFVHSYYVASEEQEILAGMSDYGVPFPALVGRDNVWGAQFHPEKSSPWGLKLLENFGKWVNEDATVSSHRS.

One can recognise a Glutamine amidotransferase type-1 domain in the interval 1 to 206; the sequence is MIGIIDYGRG…GKWVNEDATV (206 aa). The active-site Nucleophile is cysteine 79. Catalysis depends on residues histidine 181 and glutamate 183.

As to quaternary structure, heterodimer of HisH and HisF.

The protein localises to the cytoplasm. It carries out the reaction 5-[(5-phospho-1-deoxy-D-ribulos-1-ylimino)methylamino]-1-(5-phospho-beta-D-ribosyl)imidazole-4-carboxamide + L-glutamine = D-erythro-1-(imidazol-4-yl)glycerol 3-phosphate + 5-amino-1-(5-phospho-beta-D-ribosyl)imidazole-4-carboxamide + L-glutamate + H(+). The enzyme catalyses L-glutamine + H2O = L-glutamate + NH4(+). It participates in amino-acid biosynthesis; L-histidine biosynthesis; L-histidine from 5-phospho-alpha-D-ribose 1-diphosphate: step 5/9. Its function is as follows. IGPS catalyzes the conversion of PRFAR and glutamine to IGP, AICAR and glutamate. The HisH subunit catalyzes the hydrolysis of glutamine to glutamate and ammonia as part of the synthesis of IGP and AICAR. The resulting ammonia molecule is channeled to the active site of HisF. The protein is Imidazole glycerol phosphate synthase subunit HisH of Desulfitobacterium hafniense (strain DSM 10664 / DCB-2).